The following is a 90-amino-acid chain: Large ribosomal subunit protein bL31 (90 aa).

The tract at residues 65–90 (YSKQEGSGSKSNKSKSTKSKKGKGKK) is disordered. Residues 76–90 (NKSKSTKSKKGKGKK) show a composition bias toward basic residues.

The protein belongs to the bacterial ribosomal protein bL31 family. Type A subfamily. In terms of assembly, part of the 50S ribosomal subunit.

Functionally, binds the 23S rRNA. The polypeptide is Large ribosomal subunit protein bL31 (Trichodesmium erythraeum (strain IMS101)).